Reading from the N-terminus, the 72-residue chain is Caerin-regulated peptide (72 aa).

An N-terminal signal peptide occupies residues 1 to 22; the sequence is MAFLKKSLLLVLFLGLVSLSIC. The propeptide occupies 23–43; the sequence is DEEKRENEDEEEQEDDEQSEE. The segment at 24–46 is disordered; sequence EEKRENEDEEEQEDDEQSEEKRG. Over residues 30-41 the composition is skewed to acidic residues; it reads EDEEEQEDDEQS.

In terms of tissue distribution, expressed by the skin glands.

The protein localises to the secreted. Its function is as follows. Has antibacterial activity against Gram-positive bacterium M.luteus NCT C2665 and against Gram-negative bacterium E.coli K12D31. This chain is Caerin-regulated peptide, found in Agalychnis callidryas (Red-eyed tree frog).